A 134-amino-acid polypeptide reads, in one-letter code: MKKTPLLNIALSRVIASLGHGDILVIGDAGLPVPPGVELIDLALTQGIPDFISALRIVLSEMQVESHVLAEEILLKQPPALNELNTLSDEAALGERRLVSHEAFKQLSRKARAVVRTGECQPYCNIALVSGVTF.

His20 acts as the Proton donor in catalysis. Substrate is bound by residues Asp28, His101, and 123–125 (YCN).

This sequence belongs to the RbsD / FucU family. RbsD subfamily. Homodecamer.

The protein resides in the cytoplasm. The catalysed reaction is beta-D-ribopyranose = beta-D-ribofuranose. Its pathway is carbohydrate metabolism; D-ribose degradation; D-ribose 5-phosphate from beta-D-ribopyranose: step 1/2. Its function is as follows. Catalyzes the interconversion of beta-pyran and beta-furan forms of D-ribose. The polypeptide is D-ribose pyranase (Pseudomonas fluorescens (strain SBW25)).